The chain runs to 718 residues: Putative proline-rich receptor-like protein kinase PERK11 (718 aa).

Residues 1 to 256 (MDKVQQQADL…GGTSQQSNES (256 aa)) form a disordered region. The Extracellular segment spans residues 1–262 (MDKVQQQADL…SNESNYTEKT (262 aa)). Composition is skewed to pro residues over residues 45 to 105 (ATSP…PPQS), 115 to 132 (IPFPKPQLPPPSLFPPPS), and 157 to 167 (LPSPPSTPFSP). 2 stretches are compositionally biased toward low complexity: residues 168 to 203 (PSQENSGSQGSPPLSSLLPPMLPLNPNSPGNPLQPL) and 211 to 244 (SNRVPSSSSSPSPPSLSGSNNHSGGSNRHNANSN). N-linked (GlcNAc...) asparagine glycans are attached at residues Asn-231, Asn-254, and Asn-257. The chain crosses the membrane as a helical span at residues 263 to 283 (VIGIGIAGVLVILFIAGVFFV). Topologically, residues 284–718 (RRKQKKGSSS…RAFNTSHRNH (435 aa)) are cytoplasmic. Positions 314-348 (HYRQKPGNGNSSAQNSSPDTNSLGNPKHGRGTPDS) are disordered. Over residues 320–337 (GNGNSSAQNSSPDTNSLG) the composition is skewed to polar residues. Thr-359 carries the phosphothreonine modification. The 280-residue stretch at 370 to 649 (FCKSFVVGEG…VRALDTRDDL (280 aa)) folds into the Protein kinase domain. ATP is bound by residues 376 to 384 (VGEGGFGCV) and Lys-398. At Tyr-443 the chain carries Phosphotyrosine. Asp-494 acts as the Proton acceptor in catalysis. A phosphoserine mark is found at Ser-498 and Ser-527. Residues Thr-528 and Thr-533 each carry the phosphothreonine modification. Tyr-541 carries the post-translational modification Phosphotyrosine. The interval 683-718 (SSDLGTNTGYYPSQDYATSHEYESESRAFNTSHRNH) is disordered. Composition is skewed to polar residues over residues 685–699 (DLGTNTGYYPSQDYA) and 709–718 (RAFNTSHRNH).

The protein belongs to the protein kinase superfamily. Ser/Thr protein kinase family. As to expression, mostly expressed in flower buds.

The protein localises to the cell membrane. It carries out the reaction L-seryl-[protein] + ATP = O-phospho-L-seryl-[protein] + ADP + H(+). The enzyme catalyses L-threonyl-[protein] + ATP = O-phospho-L-threonyl-[protein] + ADP + H(+). This chain is Putative proline-rich receptor-like protein kinase PERK11 (PERK11), found in Arabidopsis thaliana (Mouse-ear cress).